Consider the following 240-residue polypeptide: Poxin (240 aa).

H46 acts as the Proton donor in catalysis. The Shared with catalytic histidine of dimeric partner role is filled by Y181. K185 (proton acceptor; shared with catalytic histidine of dimeric partner) is an active-site residue.

The protein belongs to the poxin family. As to quaternary structure, homodimer.

It carries out the reaction 2',3'-cGAMP + H2O = Gp(2'-5')Ap(3') + H(+). Its function is as follows. Nuclease that cleaves host 2',3'-cGAMP. The polypeptide is Poxin (p26) (Bombyx mori (Silk moth)).